The chain runs to 227 residues: Cleavage and polyadenylation specificity factor subunit 5 (227 aa).

One can recognise a Nudix hydrolase domain in the interval 76 to 201 (MRRTVEGVLI…KLVAAPLFEL (126 aa)). The interaction with RNA stretch occupies residues 102–104 (TFF). Residues 109-130 (GELNPGEDEVEGLKRLMTEILG) carry the Nudix box motif.

The protein belongs to the Nudix hydrolase family. CPSF5 subfamily. As to quaternary structure, homodimer (via N- and C-terminus); binds RNA as homodimer. Component of the cleavage factor Im (CFIm) complex.

The protein localises to the nucleus. It is found in the cytoplasm. Component of the cleavage factor Im (CFIm) complex that functions as an activator of the pre-mRNA 3'-end cleavage and polyadenylation processing required for the maturation of pre-mRNA into functional mRNAs. CFIm contributes to the recruitment of multiprotein complexes on specific sequences on the pre-mRNA 3'-end, so called cleavage and polyadenylation signals (pA signals). Most pre-mRNAs contain multiple pA signals, resulting in alternative cleavage and polyadenylation (APA) producing mRNAs with variable 3'-end formation. The CFIm complex acts as a key regulator of cleavage and polyadenylation site choice during APA through its binding to 5'-UGUA-3' elements localized in the 3'-untranslated region (UTR) for a huge number of pre-mRNAs. Binds to 5'-UGUA-3' elements localized upstream of pA signals that act as enhancers of pre-mRNA 3'-end processing. The homodimer mediates simultaneous sequence-specific recognition of two 5'-UGUA-3' elements within the pre-mRNA. Plays a role in somatic cell fate transitions and pluripotency by regulating widespread changes in gene expression through an APA-dependent function. Binds to chromatin. Binds to, but does not hydrolyze mono- and di-adenosine nucleotides. The chain is Cleavage and polyadenylation specificity factor subunit 5 from Xenopus laevis (African clawed frog).